A 308-amino-acid polypeptide reads, in one-letter code: MVVTDGVVSLKHLVSMEILSNEEVLGLIKRGLAFKEKKVTFSLDRQYFAANLFFEASTRTHKSFEVAEKKLGLDVIEFDAKTSSVNKGETLYDTILTMSALGVDICVVRHSQDDYYKELIDSRTIQTSIVNGGDGSGQHPSQCLLDLMTIYDEFASFENLKIAIAGDITHSRVAKSNMQILKRLGAQIYFAGPKEWYSSEFDVYGKYVAIDDIINQIDVMMLLRVQHERHDGKESFSKKAYHQHYGLTEERYKQLKSSAIIMHPAPVNRDVEIADSLVEAPKSRIVAQMKNGVFVRMAILEAILRGKT.

Carbamoyl phosphate-binding residues include Arg-59 and Thr-60. Lys-87 contacts L-aspartate. Positions 109, 139, and 142 each coordinate carbamoyl phosphate. The L-aspartate site is built by Arg-172 and Arg-224. The carbamoyl phosphate site is built by Ala-265 and Pro-266.

It belongs to the aspartate/ornithine carbamoyltransferase superfamily. ATCase family. As to quaternary structure, heterododecamer (2C3:3R2) of six catalytic PyrB chains organized as two trimers (C3), and six regulatory PyrI chains organized as three dimers (R2).

It catalyses the reaction carbamoyl phosphate + L-aspartate = N-carbamoyl-L-aspartate + phosphate + H(+). The protein operates within pyrimidine metabolism; UMP biosynthesis via de novo pathway; (S)-dihydroorotate from bicarbonate: step 2/3. Functionally, catalyzes the condensation of carbamoyl phosphate and aspartate to form carbamoyl aspartate and inorganic phosphate, the committed step in the de novo pyrimidine nucleotide biosynthesis pathway. This is Aspartate carbamoyltransferase catalytic subunit from Streptococcus mutans serotype c (strain ATCC 700610 / UA159).